We begin with the raw amino-acid sequence, 300 residues long: MGSHCSKNRSCRNYVTPTQKSNVREILKREHEHIMQGIVAFSCNISLENKNMKKNRYPDAPCFDYNRVVLPIRKGLDDYINASYVDGHNMKRRFICTQGPLEETALDFWQAVYQDRVRVIVMITKTYEDNKQKCYPYWMTHERSTVTYGELKIRTKKIKSFRNYKVTTLCLTNTNTGTVLDIKHFAYEDWPQGGVPSDVNNFLDFVLAVRHADSKTEVPISSESRVKESPILVHSSAGLDRAPAFCVIDICISKYSESAIIPLLTTVRDLRRQRNNCLSLSTQYIFCYFTVLQFVMSTPC.

The Tyrosine-protein phosphatase domain maps to 27-294 (LKREHEHIMQ…IFCYFTVLQF (268 aa)).

This sequence belongs to the protein-tyrosine phosphatase family.

The polypeptide is Tyrosine phosphatase-like protein J1 (J1) (Microplitis demolitor (Parasitoid wasp)).